Here is a 278-residue protein sequence, read N- to C-terminus: 2-dehydro-3-deoxyphosphooctonate aldolase (278 aa).

It belongs to the KdsA family.

It localises to the cytoplasm. The enzyme catalyses D-arabinose 5-phosphate + phosphoenolpyruvate + H2O = 3-deoxy-alpha-D-manno-2-octulosonate-8-phosphate + phosphate. It participates in carbohydrate biosynthesis; 3-deoxy-D-manno-octulosonate biosynthesis; 3-deoxy-D-manno-octulosonate from D-ribulose 5-phosphate: step 2/3. Its pathway is bacterial outer membrane biogenesis; lipopolysaccharide biosynthesis. This is 2-dehydro-3-deoxyphosphooctonate aldolase from Dechloromonas aromatica (strain RCB).